A 736-amino-acid polypeptide reads, in one-letter code: Gingipain R2 (736 aa).

A signal peptide spans 1–24; it reads MKKNFSRIVSIVAFSSLLGGMAFA. A propeptide spanning residues 25 to 229 is cleaved from the precursor; sequence QPAERGRNPQ…SVFMNYEATR (205 aa). Residues Asp307, Val329, Asp332, Tyr334, Glu336, Glu390, and His395 each coordinate Ca(2+). His440 (proton donor) is an active-site residue. The Nucleophile role is filled by Cys473. Ca(2+) is bound by residues Phe478, Glu487, Asp521, Glu522, Glu525, His531, Asp613, and Glu639.

This sequence belongs to the peptidase C25 family.

It localises to the secreted. It catalyses the reaction Hydrolysis of proteins and small molecule substrates, with a preference for Arg in P1.. Functionally, thiol protease. Acts synergistically with RgpA to catalyze the maturation of fimbrial subunits, such as FimA. Its proteolytic activity is a major factor in both periodontal tissue destruction and in evasion of host defense mechanisms. The protein is Gingipain R2 of Porphyromonas gingivalis (strain ATCC 33277 / DSM 20709 / CIP 103683 / JCM 12257 / NCTC 11834 / 2561).